Consider the following 71-residue polypeptide: Translation initiation factor IF-1 (71 aa).

Positions 1–71 constitute an S1-like domain; that stretch reads MANDVIEIEG…TKGRITYRFR (71 aa).

This sequence belongs to the IF-1 family. As to quaternary structure, component of the 30S ribosomal translation pre-initiation complex which assembles on the 30S ribosome in the order IF-2 and IF-3, IF-1 and N-formylmethionyl-tRNA(fMet); mRNA recruitment can occur at any time during PIC assembly.

The protein resides in the cytoplasm. Functionally, one of the essential components for the initiation of protein synthesis. Stabilizes the binding of IF-2 and IF-3 on the 30S subunit to which N-formylmethionyl-tRNA(fMet) subsequently binds. Helps modulate mRNA selection, yielding the 30S pre-initiation complex (PIC). Upon addition of the 50S ribosomal subunit IF-1, IF-2 and IF-3 are released leaving the mature 70S translation initiation complex. This chain is Translation initiation factor IF-1, found in Leuconostoc mesenteroides subsp. mesenteroides (strain ATCC 8293 / DSM 20343 / BCRC 11652 / CCM 1803 / JCM 6124 / NCDO 523 / NBRC 100496 / NCIMB 8023 / NCTC 12954 / NRRL B-1118 / 37Y).